Consider the following 468-residue polypeptide: Elongation factor 1-alpha (468 aa).

In terms of domain architecture, tr-type G spans 6-244; it reads KPHINIVVIG…DNIPLPARPS (239 aa). The G1 stretch occupies residues 15 to 22; the sequence is GHVDSGKS. 15-22 provides a ligand contact to GTP; sequence GHVDSGKS. Positions 71 to 75 are G2; the sequence is GITID. The G3 stretch occupies residues 92–95; it reads DAPG. GTP contacts are provided by residues 92-96 and 154-157; these read DAPGH and NKID. The G4 stretch occupies residues 154-157; that stretch reads NKID. The tract at residues 195–197 is G5; it reads SGW. A 5-glutamyl glycerylphosphorylethanolamine mark is found at E303 and E376.

This sequence belongs to the TRAFAC class translation factor GTPase superfamily. Classic translation factor GTPase family. EF-Tu/EF-1A subfamily.

Its subcellular location is the cytoplasm. In terms of biological role, this protein promotes the GTP-dependent binding of aminoacyl-tRNA to the A-site of ribosomes during protein biosynthesis. This chain is Elongation factor 1-alpha, found in Hydra vulgaris (Hydra).